The following is a 294-amino-acid chain: 4-hydroxy-tetrahydrodipicolinate synthase (294 aa).

Residue Thr-47 participates in pyruvate binding. Tyr-136 (proton donor/acceptor) is an active-site residue. The active-site Schiff-base intermediate with substrate is the Lys-164. Val-206 lines the pyruvate pocket.

The protein belongs to the DapA family. Homotetramer; dimer of dimers.

The protein localises to the cytoplasm. It catalyses the reaction L-aspartate 4-semialdehyde + pyruvate = (2S,4S)-4-hydroxy-2,3,4,5-tetrahydrodipicolinate + H2O + H(+). It participates in amino-acid biosynthesis; L-lysine biosynthesis via DAP pathway; (S)-tetrahydrodipicolinate from L-aspartate: step 3/4. Functionally, catalyzes the condensation of (S)-aspartate-beta-semialdehyde [(S)-ASA] and pyruvate to 4-hydroxy-tetrahydrodipicolinate (HTPA). In Cyanothece sp. (strain PCC 7425 / ATCC 29141), this protein is 4-hydroxy-tetrahydrodipicolinate synthase.